The sequence spans 299 residues: MIPIKTPKGVFNVWTKRIGNNPKVKVLLLAGGPGFPHDYLEAFESYFPGEGIEFYYYDELGNGNSDKPGDSSRYNVASAVDEVEQVRQALKLDSSNFYLFGHSWGGALGMEYAIKYQNNLKALIVSNMVASGKEFNRYVQQVLVKQLPPAILDTINDLSARNDYSNPKYSELVTRHFYARFICRLPLDQWPEPLNRAFSKVNTPYYLTLQGPSELGIIGSLQTWDISARLKEIAVPALFIGAGYDEMDPEHIKWMSQQVPHGQFLYCANGSHLSMYDQQPFYMNGIIRFIKEVNNSSAN.

The AB hydrolase-1 domain occupies 26 to 272; the sequence is VLLLAGGPGF…QFLYCANGSH (247 aa). S103 acts as the Nucleophile in catalysis. Residue D245 is part of the active site. H272 (proton donor) is an active-site residue.

It belongs to the peptidase S33 family. As to quaternary structure, monomer.

It carries out the reaction Release of N-terminal proline from a peptide.. In terms of biological role, releases the N-terminal proline from various substrates. In Chitinophaga pinensis (strain ATCC 43595 / DSM 2588 / LMG 13176 / NBRC 15968 / NCIMB 11800 / UQM 2034), this protein is Proline iminopeptidase.